A 558-amino-acid chain; its full sequence is Formate--tetrahydrofolate ligase (558 aa).

Threonine 66–threonine 73 is an ATP binding site.

Belongs to the formate--tetrahydrofolate ligase family.

The catalysed reaction is (6S)-5,6,7,8-tetrahydrofolate + formate + ATP = (6R)-10-formyltetrahydrofolate + ADP + phosphate. The protein operates within one-carbon metabolism; tetrahydrofolate interconversion. In Neisseria gonorrhoeae (strain ATCC 700825 / FA 1090), this protein is Formate--tetrahydrofolate ligase.